The sequence spans 228 residues: uncharacterized protein (228 aa).

An HTH gntR-type domain is found at 11 to 78; sequence PPVNQQIYRI…PQRGSYVNKI (68 aa). A DNA-binding region (H-T-H motif) is located at residues 38-57; the sequence is EKEVSVRFNVSRQPVREAFI.

This is an uncharacterized protein from Escherichia coli O6:H1 (strain CFT073 / ATCC 700928 / UPEC).